The primary structure comprises 361 residues: Probable mannose-1-phosphate guanylyltransferase 3 (361 aa).

L6 and V7 together coordinate GDP-alpha-D-mannose. Residues G9, G11, T12, R13, and K23 each contribute to the diphosphate site. Residues G85, N109, D111, G146, and N173 each coordinate GDP-alpha-D-mannose.

The protein belongs to the transferase hexapeptide repeat family.

The enzyme catalyses alpha-D-mannose 1-phosphate + GTP + H(+) = GDP-alpha-D-mannose + diphosphate. The protein operates within nucleotide-sugar biosynthesis; GDP-alpha-D-mannose biosynthesis; GDP-alpha-D-mannose from alpha-D-mannose 1-phosphate (GTP route): step 1/1. Functionally, catalyzes a reaction of the Smirnoff-Wheeler pathway, the major route to ascorbate biosynthesis in plants. The protein is Probable mannose-1-phosphate guanylyltransferase 3 of Oryza sativa subsp. japonica (Rice).